The primary structure comprises 393 residues: ATP phosphoribosyltransferase regulatory subunit (393 aa).

It belongs to the class-II aminoacyl-tRNA synthetase family. HisZ subfamily. Heteromultimer composed of HisG and HisZ subunits.

Its subcellular location is the cytoplasm. The protein operates within amino-acid biosynthesis; L-histidine biosynthesis; L-histidine from 5-phospho-alpha-D-ribose 1-diphosphate: step 1/9. Required for the first step of histidine biosynthesis. May allow the feedback regulation of ATP phosphoribosyltransferase activity by histidine. The sequence is that of ATP phosphoribosyltransferase regulatory subunit from Marinobacter nauticus (strain ATCC 700491 / DSM 11845 / VT8) (Marinobacter aquaeolei).